The chain runs to 297 residues: Protein AKTIP homolog (297 aa).

A disordered region spans residues 13–75 (FLSDLDEKSS…QRSPSGSSPE (63 aa)). Residues 17–42 (LDEKSSSSPHDEKKPGDGREVREEKS) show a composition bias toward basic and acidic residues. Polar residues predominate over residues 59-75 (MNLSIARQRSPSGSSPE). Residues 84–232 (FLEYTLMAEY…VNECLRRCHN (149 aa)) form the UBC core domain.

This sequence belongs to the ubiquitin-conjugating enzyme family. FTS subfamily.

The protein is Protein AKTIP homolog of Nematostella vectensis (Starlet sea anemone).